The following is a 102-amino-acid chain: NADH-quinone oxidoreductase subunit K (102 aa).

A run of 3 helical transmembrane segments spans residues 6 to 26 (MEHG…GLMV), 30 to 50 (ILFI…AFVV), and 62 to 82 (VMFI…LAIL).

This sequence belongs to the complex I subunit 4L family. NDH-1 is composed of 13 different subunits. Subunits NuoA, H, J, K, L, M, N constitute the membrane sector of the complex.

It is found in the cell inner membrane. The catalysed reaction is a quinone + NADH + 5 H(+)(in) = a quinol + NAD(+) + 4 H(+)(out). NDH-1 shuttles electrons from NADH, via FMN and iron-sulfur (Fe-S) centers, to quinones in the respiratory chain. The immediate electron acceptor for the enzyme in this species is believed to be ubiquinone. Couples the redox reaction to proton translocation (for every two electrons transferred, four hydrogen ions are translocated across the cytoplasmic membrane), and thus conserves the redox energy in a proton gradient. This is NADH-quinone oxidoreductase subunit K from Ectopseudomonas mendocina (strain ymp) (Pseudomonas mendocina).